Reading from the N-terminus, the 219-residue chain is Kynurenine formamidase (219 aa).

W28 contributes to the substrate binding site. Zn(2+) is bound by residues H58, H62, and D64. H68 (proton donor/acceptor) is an active-site residue. Zn(2+) is bound by residues H170 and E182.

The protein belongs to the Cyclase 1 superfamily. KynB family. In terms of assembly, homodimer. Zn(2+) serves as cofactor.

It carries out the reaction N-formyl-L-kynurenine + H2O = L-kynurenine + formate + H(+). Its pathway is amino-acid degradation; L-tryptophan degradation via kynurenine pathway; L-kynurenine from L-tryptophan: step 2/2. Its function is as follows. Catalyzes the hydrolysis of N-formyl-L-kynurenine to L-kynurenine, the second step in the kynurenine pathway of tryptophan degradation. This Cupriavidus pinatubonensis (strain JMP 134 / LMG 1197) (Cupriavidus necator (strain JMP 134)) protein is Kynurenine formamidase.